The sequence spans 79 residues: Conotoxin ArMSGL-0121 (79 aa).

The N-terminal stretch at 1–20 (MSRLGIMVLTLLLLVFIVTS) is a signal peptide. The propeptide occupies 21–44 (HQDAGEKQATQRNAINFRWRRSFT). 3 cysteine pairs are disulfide-bonded: Cys-52–Cys-64, Cys-56–Cys-73, and Cys-63–Cys-77. Leu-78 is subject to Leucine amide.

It belongs to the conotoxin O3 superfamily. In terms of tissue distribution, expressed by the venom duct.

The protein resides in the secreted. This is Conotoxin ArMSGL-0121 from Conus arenatus (Sand-dusted cone).